The primary structure comprises 226 residues: Urease accessory protein UreF (226 aa).

This sequence belongs to the UreF family. As to quaternary structure, ureD, UreF and UreG form a complex that acts as a GTP-hydrolysis-dependent molecular chaperone, activating the urease apoprotein by helping to assemble the nickel containing metallocenter of UreC. The UreE protein probably delivers the nickel.

The protein localises to the cytoplasm. Functionally, required for maturation of urease via the functional incorporation of the urease nickel metallocenter. The protein is Urease accessory protein UreF of Burkholderia multivorans (strain ATCC 17616 / 249).